Here is a 254-residue protein sequence, read N- to C-terminus: Ribosomal RNA small subunit methyltransferase G (254 aa).

Positions 84–109 (NTESKTSLNNAETKNTNEALLTSEPF) are insert. S-adenosyl-L-methionine is bound by residues glycine 115, phenylalanine 120, 171-172 (AE), and arginine 185.

Belongs to the methyltransferase superfamily. RNA methyltransferase RsmG family.

It is found in the cytoplasm. Functionally, specifically methylates the N7 position of a guanine in 16S rRNA. The protein is Ribosomal RNA small subunit methyltransferase G of Treponema denticola (strain ATCC 35405 / DSM 14222 / CIP 103919 / JCM 8153 / KCTC 15104).